Consider the following 373-residue polypeptide: Probable jasmonic acid carboxyl methyltransferase 1 (373 aa).

Tyrosine 18 lines the S-adenosyl-L-homocysteine pocket. Jasmonate is bound at residue glutamine 25. The S-adenosyl-L-homocysteine site is built by cysteine 59, asparagine 64, aspartate 96, leucine 97, serine 135, and phenylalanine 136. Residues histidine 156 and tryptophan 157 each coordinate jasmonate. Mg(2+) contacts are provided by asparagine 174, aspartate 260, phenylalanine 262, and asparagine 263.

The protein belongs to the methyltransferase superfamily. Type-7 methyltransferase family. Requires Mg(2+) as cofactor.

The protein localises to the cytoplasm. It is found in the nucleus. The enzyme catalyses jasmonate + S-adenosyl-L-methionine = methyl (-)-jasmonate + S-adenosyl-L-homocysteine. Its pathway is lipid metabolism; oxylipin biosynthesis. Functionally, catalyzes the methylation of jasmonate into methyljasmonate, a plant volatile that acts as an important cellular regulator mediating diverse developmental processes and defense responses. This chain is Probable jasmonic acid carboxyl methyltransferase 1, found in Theobroma cacao (Cacao).